Consider the following 376-residue polypeptide: Putative cytosolic 5'-nucleotidase 3 (376 aa).

Asp-119 acts as the Nucleophile in catalysis. The Mg(2+) site is built by Asp-119 and Asp-121. The active-site Proton donor is Asp-121. Substrate contacts are provided by residues Glu-168, Ser-189, 236–237 (SA), and Lys-286. Asp-312 lines the Mg(2+) pocket.

It belongs to the pyrimidine 5'-nucleotidase family.

Its subcellular location is the cytoplasm. The catalysed reaction is a ribonucleoside 5'-phosphate + H2O = a ribonucleoside + phosphate. This chain is Putative cytosolic 5'-nucleotidase 3, found in Caenorhabditis elegans.